The chain runs to 211 residues: Superoxide dismutase [Mn], mitochondrial (211 aa).

The N-terminal 24 residues, 1–24 (MLCRAVCSASRRLAPALGILGVRQ), are a transit peptide targeting the mitochondrion. H50 is a Mn(2+) binding site. Y58 carries the 3'-nitrotyrosine modification. N6-acetyllysine; alternate is present on residues K68 and K75. 2 positions are modified to N6-succinyllysine; alternate: K68 and K75. H98 serves as a coordination point for Mn(2+). N6-acetyllysine is present on K114. Residues K122 and K130 each carry the N6-acetyllysine; alternate modification. K122 and K130 each carry N6-succinyllysine; alternate. Residues D183 and H187 each contribute to the Mn(2+) site. Position 202 is an N6-acetyllysine (K202).

It belongs to the iron/manganese superoxide dismutase family. Homotetramer. Mn(2+) is required as a cofactor. Nitrated under oxidative stress. Nitration coupled with oxidation inhibits the catalytic activity. Post-translationally, acetylation at Lys-122 decreases enzymatic activity. Deacetylated by SIRT3 upon exposure to ionizing radiations or after long fasting. In terms of processing, polyubiquitinated; leading to proteasomal degradation. Deubiquitinated by USP36 which increases protein stability.

Its subcellular location is the mitochondrion matrix. It catalyses the reaction 2 superoxide + 2 H(+) = H2O2 + O2. Its function is as follows. Destroys superoxide anion radicals which are normally produced within the cells and which are toxic to biological systems. The polypeptide is Superoxide dismutase [Mn], mitochondrial (SOD2) (Cavia porcellus (Guinea pig)).